A 470-amino-acid polypeptide reads, in one-letter code: MDYLPMFAKLDGRPVLLVGGGEVALRKARLLLAAGARLTLVSPELEPDFHQFADRFTHLAERFTPAHLTGQILVVAATDDLEVNALVYQSANQLGLFVNVVDDPKRSSFIFPSIIDRSPIMVAVSSGGKAPVLVRLLRERLESLLPRHLGALAELSGRVRDQAKRVLSSISDRRRFWERAFASNTLAGLIEKEDWQGAEQWLNDGLDQAKNEVGEVVLVGAGPGDPGLLTLKALQQIQQAEVVLYDQLVSPEILDLVRRDATLVSVGKKAGAHSVPQEETNRLLVEYAKAGNRVVRLKGGDPFMFGRGGEELEVLAEEGIPFSVVPGITAAAGATAYAGIPLTHRDHAQSAVFITGHCQIDGKEPDWQQLAATSQTLVIYMGLMRSEHIQQQLVSHGRSSATPIAIIERGTTARQRVLTGTLADLAELAAQAVSPSLIVIGEVVALRERLAWFGEGQQQGTCDLKLVSLA.

The interval 1–202 (MDYLPMFAKL…EDWQGAEQWL (202 aa)) is precorrin-2 dehydrogenase /sirohydrochlorin ferrochelatase. NAD(+)-binding positions include 22 to 23 (EV) and 43 to 44 (PE). The residue at position 126 (serine 126) is a Phosphoserine. The interval 214-470 (GEVVLVGAGP…TCDLKLVSLA (257 aa)) is uroporphyrinogen-III C-methyltransferase. Proline 223 lines the S-adenosyl-L-methionine pocket. Aspartate 246 functions as the Proton acceptor in the catalytic mechanism. Lysine 268 (proton donor) is an active-site residue. S-adenosyl-L-methionine-binding positions include 299–301 (GGD), 329–330 (TA), methionine 381, and glycine 410.

The protein in the N-terminal section; belongs to the precorrin-2 dehydrogenase / sirohydrochlorin ferrochelatase family. It in the C-terminal section; belongs to the precorrin methyltransferase family.

The enzyme catalyses uroporphyrinogen III + 2 S-adenosyl-L-methionine = precorrin-2 + 2 S-adenosyl-L-homocysteine + H(+). The catalysed reaction is precorrin-2 + NAD(+) = sirohydrochlorin + NADH + 2 H(+). It carries out the reaction siroheme + 2 H(+) = sirohydrochlorin + Fe(2+). It participates in cofactor biosynthesis; adenosylcobalamin biosynthesis; precorrin-2 from uroporphyrinogen III: step 1/1. Its pathway is cofactor biosynthesis; adenosylcobalamin biosynthesis; sirohydrochlorin from precorrin-2: step 1/1. It functions in the pathway porphyrin-containing compound metabolism; siroheme biosynthesis; precorrin-2 from uroporphyrinogen III: step 1/1. The protein operates within porphyrin-containing compound metabolism; siroheme biosynthesis; siroheme from sirohydrochlorin: step 1/1. It participates in porphyrin-containing compound metabolism; siroheme biosynthesis; sirohydrochlorin from precorrin-2: step 1/1. Functionally, multifunctional enzyme that catalyzes the SAM-dependent methylations of uroporphyrinogen III at position C-2 and C-7 to form precorrin-2 via precorrin-1. Then it catalyzes the NAD-dependent ring dehydrogenation of precorrin-2 to yield sirohydrochlorin. Finally, it catalyzes the ferrochelation of sirohydrochlorin to yield siroheme. The sequence is that of Siroheme synthase 2 from Aeromonas hydrophila subsp. hydrophila (strain ATCC 7966 / DSM 30187 / BCRC 13018 / CCUG 14551 / JCM 1027 / KCTC 2358 / NCIMB 9240 / NCTC 8049).